The sequence spans 20 residues: Non-specific lipid-transfer protein-like protein (20 aa).

This sequence belongs to the plant LTP family.

The polypeptide is Non-specific lipid-transfer protein-like protein (Jatropha curcas (Barbados nut)).